Reading from the N-terminus, the 171-residue chain is Co-chaperone protein HscB (171 aa).

The region spanning 2-74 (DYFTLFGLPA…LTRAEYLLSL (73 aa)) is the J domain.

This sequence belongs to the HscB family. Interacts with HscA and stimulates its ATPase activity. Interacts with IscU.

Its function is as follows. Co-chaperone involved in the maturation of iron-sulfur cluster-containing proteins. Seems to help targeting proteins to be folded toward HscA. The polypeptide is Co-chaperone protein HscB (Citrobacter koseri (strain ATCC BAA-895 / CDC 4225-83 / SGSC4696)).